A 193-amino-acid polypeptide reads, in one-letter code: Endoribonuclease YbeY (193 aa).

Positions 109, 113, and 119 each coordinate Zn(2+). The interval 143–193 (GAALREGRREGRAGEAKDRWTRSPTSISTPSRSGSTARGSRAKTSRAGSRT) is disordered. The segment covering 147–163 (REGRREGRAGEAKDRWT) has biased composition (basic and acidic residues). The segment covering 164 to 181 (RSPTSISTPSRSGSTARG) has biased composition (low complexity).

This sequence belongs to the endoribonuclease YbeY family. Zn(2+) is required as a cofactor.

It is found in the cytoplasm. Its function is as follows. Single strand-specific metallo-endoribonuclease involved in late-stage 70S ribosome quality control and in maturation of the 3' terminus of the 16S rRNA. In Anaeromyxobacter dehalogenans (strain 2CP-C), this protein is Endoribonuclease YbeY.